We begin with the raw amino-acid sequence, 263 residues long: Flagellar brake protein YcgR (263 aa).

Positions 1–21 are disordered; the sequence is MAELSTPSPASPAPLDGGRGD. Residues 133–250 form the PilZ domain; sequence QRREFYRLQV…DTRIQRYIFK (118 aa).

Belongs to the YcgR family. Monomer. Interacts with the flagellar basal bodies.

Its subcellular location is the bacterial flagellum basal body. In terms of biological role, acts as a flagellar brake, regulating swimming and swarming in a bis-(3'-5') cyclic diguanylic acid (c-di-GMP)-dependent manner. Binds 1 c-di-GMP dimer per subunit. Increasing levels of c-di-GMP lead to decreased motility. This is Flagellar brake protein YcgR from Thauera aminoaromatica.